We begin with the raw amino-acid sequence, 224 residues long: Probable GTP-binding protein EngB (224 aa).

The region spanning 31 to 205 (IGVEIAFAGR…LSILNDWCHP (175 aa)) is the EngB-type G domain. GTP contacts are provided by residues 39-46 (GRSNAGKS), 66-70 (GRTQL), 84-87 (DLPG), 151-154 (TKSD), and 184-186 (LSS). Ser-46 and Thr-68 together coordinate Mg(2+).

This sequence belongs to the TRAFAC class TrmE-Era-EngA-EngB-Septin-like GTPase superfamily. EngB GTPase family. The cofactor is Mg(2+).

Functionally, necessary for normal cell division and for the maintenance of normal septation. In Shewanella frigidimarina (strain NCIMB 400), this protein is Probable GTP-binding protein EngB.